We begin with the raw amino-acid sequence, 503 residues long: 2-phosphoxylose phosphatase 1 (503 aa).

Residues 1–6 are Cytoplasmic-facing; that stretch reads MLARSR. The helical; Signal-anchor for type II membrane protein transmembrane segment at 7 to 27 threads the bilayer; the sequence is FILVLVVGALLAVLSFSLQYL. At 28–503 the chain is on the lumenal side; the sequence is HLIPTNPVAE…YQQACHQTVL (476 aa). A disordered region spans residues 38–63; it reads QRSAGRSRKRVNPVLHTDPPAPDPIR. An N-linked (GlcNAc...) asparagine glycan is attached at Asn73. The active-site Nucleophile is His98. N-linked (GlcNAc...) asparagine glycosylation occurs at Asn365. Asp396 functions as the Proton donor in the catalytic mechanism. N-linked (GlcNAc...) asparagine glycosylation is present at Asn490.

The protein belongs to the histidine acid phosphatase family.

It localises to the golgi apparatus membrane. It carries out the reaction 3-O-[beta-D-GlcA-(1-&gt;3)-beta-D-Gal-(1-&gt;3)-beta-D-Gal-(1-&gt;4)-beta-D-2-O-P-Xyl]-L-seryl-[protein] + H2O = 3-O-(beta-D-GlcA-(1-&gt;3)-beta-D-Gal-(1-&gt;3)-beta-D-Gal-(1-&gt;4)-beta-D-Xyl)-L-seryl-[protein] + phosphate. In terms of biological role, responsible for the 2-O-dephosphorylation of xylose in the glycosaminoglycan-protein linkage region of proteoglycans thereby regulating the amount of mature glycosaminoglycan (GAG) chains. Sulfated glycosaminoglycans (GAGs), including heparan sulfate and chondroitin sulfate, are synthesized on the so-called common GAG-protein linkage region (GlcUAbeta1-3Galbeta1-3Galbeta1-4Xylbeta1-O-Ser) of core proteins, which is formed by the stepwise addition of monosaccharide residues by the respective specific glycosyltransferases. This Danio rerio (Zebrafish) protein is 2-phosphoxylose phosphatase 1.